A 476-amino-acid chain; its full sequence is ATP synthase subunit beta (476 aa).

162–169 serves as a coordination point for ATP; that stretch reads GGAGVGKT.

Belongs to the ATPase alpha/beta chains family. In terms of assembly, F-type ATPases have 2 components, CF(1) - the catalytic core - and CF(0) - the membrane proton channel. CF(1) has five subunits: alpha(3), beta(3), gamma(1), delta(1), epsilon(1). CF(0) has three main subunits: a(1), b(2) and c(9-12). The alpha and beta chains form an alternating ring which encloses part of the gamma chain. CF(1) is attached to CF(0) by a central stalk formed by the gamma and epsilon chains, while a peripheral stalk is formed by the delta and b chains.

Its subcellular location is the cell membrane. It catalyses the reaction ATP + H2O + 4 H(+)(in) = ADP + phosphate + 5 H(+)(out). Produces ATP from ADP in the presence of a proton gradient across the membrane. The catalytic sites are hosted primarily by the beta subunits. This chain is ATP synthase subunit beta, found in Mycoplasma capricolum subsp. capricolum (strain California kid / ATCC 27343 / NCTC 10154).